Here is a 44-residue protein sequence, read N- to C-terminus: Putative protein PsbN (44 aa).

A helical membrane pass occupies residues 3-23 (IISFLSTIFLGFFIISTTIYS).

Belongs to the PsbN family.

Its subcellular location is the plastid. The protein localises to the chloroplast thylakoid membrane. Functionally, may play a role in photosystem I and II biogenesis. This Euglena gracilis protein is Putative protein PsbN.